A 209-amino-acid polypeptide reads, in one-letter code: Uracil phosphoribosyltransferase (209 aa).

Residues Arg79, Arg104, and 131-139 each bind 5-phospho-alpha-D-ribose 1-diphosphate; that span reads DPMLATGGS. Uracil-binding positions include Ile194 and 199 to 201; that span reads GDA. Asp200 is a 5-phospho-alpha-D-ribose 1-diphosphate binding site.

It belongs to the UPRTase family. It depends on Mg(2+) as a cofactor.

It catalyses the reaction UMP + diphosphate = 5-phospho-alpha-D-ribose 1-diphosphate + uracil. It functions in the pathway pyrimidine metabolism; UMP biosynthesis via salvage pathway; UMP from uracil: step 1/1. Allosterically activated by GTP. In terms of biological role, catalyzes the conversion of uracil and 5-phospho-alpha-D-ribose 1-diphosphate (PRPP) to UMP and diphosphate. This chain is Uracil phosphoribosyltransferase, found in Clostridium perfringens (strain ATCC 13124 / DSM 756 / JCM 1290 / NCIMB 6125 / NCTC 8237 / Type A).